The sequence spans 208 residues: 3-demethoxyubiquinol 3-hydroxylase (208 aa).

Glu-57, Glu-87, His-90, Glu-139, Glu-171, and His-174 together coordinate Fe cation.

It belongs to the COQ7 family. It depends on Fe cation as a cofactor.

Its subcellular location is the cell membrane. The catalysed reaction is a 5-methoxy-2-methyl-3-(all-trans-polyprenyl)benzene-1,4-diol + AH2 + O2 = a 3-demethylubiquinol + A + H2O. It functions in the pathway cofactor biosynthesis; ubiquinone biosynthesis. Catalyzes the hydroxylation of 2-nonaprenyl-3-methyl-6-methoxy-1,4-benzoquinol during ubiquinone biosynthesis. This Verminephrobacter eiseniae (strain EF01-2) protein is 3-demethoxyubiquinol 3-hydroxylase.